A 1077-amino-acid polypeptide reads, in one-letter code: Serine/threonine-protein kinase sel-5 (1077 aa).

The region spanning 47 to 317 (VTIEKQIAEG…IYQTSVLAFE (271 aa)) is the Protein kinase domain. Residues 53–61 (IAEGGFAIV) and lysine 75 each bind ATP. Aspartate 178 serves as the catalytic Proton acceptor. Disordered regions lie at residues 347 to 444 (MRDG…TDGS), 488 to 554 (GFTD…SQVV), 616 to 813 (ELDS…TNPF), and 920 to 1077 (LISV…PTDL). The segment covering 369-399 (IQSSSKMASLSQQVPSISNISMPSGSGTVET) has biased composition (polar residues). The span at 491–515 (DLDKPALPRDRAQTDGKRRLPHESD) shows a compositional bias: basic and acidic residues. The span at 541–554 (SSQQTTSKTSSQVV) shows a compositional bias: low complexity. A compositionally biased stretch (polar residues) spans 638–648 (LTVSTSSSAQP). Over residues 655–679 (TDEDDERQLLSETDEEEKYEIDEKE) the composition is skewed to acidic residues. Composition is skewed to basic and acidic residues over residues 697–708 (DEQRMNDRRRYS) and 739–751 (DSRR…HDED). Residues 770–780 (EDDGLEDDDDH) show a composition bias toward acidic residues. The segment covering 799 to 810 (GTSTPHTQNPIT) has biased composition (polar residues). Positions 927–936 (TDPPPPPLPK) are enriched in pro residues. The segment covering 941–950 (ASPTQETTAT) has biased composition (polar residues). Residues 960–969 (KLLKKEKKKE) are compositionally biased toward basic residues. Positions 970–989 (KKDGKKDKLKLEEYREKGSS) are enriched in basic and acidic residues. Positions 1054–1067 (LTGKNASFVNTSFQ) are enriched in polar residues.

Belongs to the protein kinase superfamily. Ser/Thr protein kinase family. The cofactor is Mg(2+).

Its subcellular location is the cytoplasm. The enzyme catalyses L-seryl-[protein] + ATP = O-phospho-L-seryl-[protein] + ADP + H(+). The catalysed reaction is L-threonyl-[protein] + ATP = O-phospho-L-threonyl-[protein] + ADP + H(+). Functionally, serine/threonine-protein kinase which may play a role in lin-12-mediated cell-fate decisions. This is Serine/threonine-protein kinase sel-5 from Caenorhabditis elegans.